Here is a 1233-residue protein sequence, read N- to C-terminus: MASSNPPPQPAIGDQLVPGAPGPSSEAEDDPGEAFEFDDSDDEEDTSAALGVPSLAPERDTDPPLIHLDSIPVTDPDPAAAPPGTGVPAWVSNGDAADAAFSGARHSSWKRKSSRRIDRFTFPALEEDVIYDDVPCESPDAHQPGAERNLLYEDAHRAGAPRQAEDLGWSSSEFESYSEDSGEEAKPEVEPAKHRVSFQPKMTQLMKAAKSGTKDGLEKTRMAVMRKVSFLHRKDVLGDSEEEDMGLLEVSVSDIKPPAPELGPMPEGLSPQQVVRRHILGSIVQSEGSYVESLKRILQDYRNPLMEMEPKALSARKCQVVFFRVKEILHCHSMFQIALSSRVAEWDSTEKIGDLFVASFSKSMVLDVYSDYVNNFTGAMSIIKKACLTKPAFLEFLKRRQVCSSDRVTLYGLMVKPIQRFPQFILLLQDMLKNTPRGHPDRLSLQLALTELETLAEKLNEQKRLADQVAEIQQLTKSVSDRSSLNKLLTSGQRQLLLCETLTETVYGDRGQLIKSKERRVFLLNDMLVCANINFKGQLEISSLVPLGPKYVVKWNTALPQVQVVEVGQDGGTYDKDNVLIQHSGAKKASASGQAQNKVYLGPPRLFQELQDLQKDLAVVEQITLLISTLHGTYQNLNMTVAQDWCLALQRLMRVKEEEIHSANKCRLRLLLPGKPDKSGRPTSFMVVFITPNPLSKISWVNRLHLAKIGLREENQPGWLCPDEDKKSKAPFWCPILACCIPAFSSRALSLQLGALVHSPVNCPLLGFSAVSTSLPQGYLWVGGGQEGAGGQVEIFSLNRPSPRTVKSFPLAAPVLCMEYIPELEEEAESRDESPTAADPSATVHPTICLGLQDGSILLYGSVDTGTQCLASCRSPGLQPVLCLRHSPFYLLAGLQDGTLAAYPRTSGGVLWDLESPPVCLTVGPGPVRTLLSLEDAVWASCGPRVTVLEATTLQPQQSFEAHQDEAVSVTHMVKAGSGVWMAFSSGTSIRLFHTETLEHLQEINIATRTTFLLPGQKHLCVTSLLICQGLLWVGTDQGVIVLLPVPRLEGIPKITGKGMVSLNGHCGPVAFLAVAISILAPDILRSDQEEAEGPRAEEEKPDGQAHQPMPDSHVGRELTRKKGILLQYRLRSTAHLPGPLLSMREPAPADGAALEHSEEDGSIYEMADDPDVWVRSRPCARDAHRKEICSVAIISGGQGYRNFGSALGSSGRLAPCGETDSTLLIWQVPLML.

Positions 1 to 10 are enriched in pro residues; that stretch reads MASSNPPPQP. The disordered stretch occupies residues 1 to 93; it reads MASSNPPPQP…GTGVPAWVSN (93 aa). The segment covering 26–46 has biased composition (acidic residues); the sequence is EAEDDPGEAFEFDDSDDEEDT. At serine 40 the chain carries Phosphoserine. Low complexity predominate over residues 72-89; that stretch reads PVTDPDPAAAPPGTGVPA. 2 positions are modified to phosphotyrosine: tyrosine 131 and tyrosine 152. Residues 159-193 form a disordered region; sequence GAPRQAEDLGWSSSEFESYSEDSGEEAKPEVEPAK. The span at 183 to 193 shows a compositional bias: basic and acidic residues; sequence EEAKPEVEPAK. Phosphoserine is present on serine 240. Positions 275 to 462 constitute a DH domain; sequence VRRHILGSIV…ETLAEKLNEQ (188 aa). The segment covering 1089–1104 has biased composition (basic and acidic residues); the sequence is QEEAEGPRAEEEKPDG. 2 disordered regions span residues 1089 to 1117 and 1140 to 1161; these read QEEA…HVGR and PLLS…SEED.

In terms of assembly, interacts with RHOA, RHOB and RHOC.

It localises to the cytoplasm. Functionally, acts as a guanine nucleotide exchange factor (GEF) for RHOA, RHOB and RHOC. In Pongo abelii (Sumatran orangutan), this protein is Rho guanine nucleotide exchange factor 10-like protein (ARHGEF10L).